A 336-amino-acid polypeptide reads, in one-letter code: Heat-inducible transcription repressor HrcA (336 aa).

It belongs to the HrcA family.

Functionally, negative regulator of class I heat shock genes (grpE-dnaK-dnaJ and groELS operons). Prevents heat-shock induction of these operons. This chain is Heat-inducible transcription repressor HrcA, found in Variovorax paradoxus (strain S110).